The chain runs to 321 residues: Sex-lethal homolog (321 aa).

RRM domains follow at residues 78 to 156 (TNLI…FARP) and 164 to 244 (TNLY…VAEE).

Expressed in gonads and somatic tissues of both sexes. In the ovary, expressed in the last egg chamber of each ovariole. Highly expressed in nurse cells with low expression found in oocytes. Highly expressed in testis with lower expression in testis sheath and vas deferentia.

Its subcellular location is the nucleus. In terms of biological role, unknown; apparently not involved in somatic sex determination. This Megaselia scalaris (Humpbacked fly) protein is Sex-lethal homolog (SXL).